The sequence spans 370 residues: Protein Wnt-1 (370 aa).

The signal sequence occupies residues 1–19 (MRVLALLLAVKAACVLLVS). Residue Asn-28 is glycosylated (N-linked (GlcNAc...) asparagine). Intrachain disulfides connect Cys-92–Cys-103, Cys-142–Cys-150, Cys-152–Cys-169, Cys-217–Cys-231, and Cys-219–Cys-226. The O-palmitoleoyl serine; by PORCN moiety is linked to residue Ser-223. The tract at residues 261-282 (GSNRASHRADPRHLEPENPAHK) is disordered. Over residues 267–280 (HRADPRHLEPENPA) the composition is skewed to basic and acidic residues. Intrachain disulfides connect Cys-299/Cys-330, Cys-315/Cys-325, Cys-329/Cys-369, Cys-345/Cys-360, Cys-347/Cys-357, and Cys-352/Cys-353. Asn-316 carries an N-linked (GlcNAc...) asparagine glycan. Asn-359 is a glycosylation site (N-linked (GlcNAc...) asparagine).

Belongs to the Wnt family. Palmitoleoylation is required for efficient binding to frizzled receptors. Palmitoleoylation is necessary for proper trafficking to cell surface. Depalmitoleoylated by NOTUM, leading to inhibit Wnt signaling pathway.

It is found in the secreted. Its subcellular location is the extracellular space. The protein resides in the extracellular matrix. In terms of biological role, ligand for members of the frizzled family of seven transmembrane receptors. Acts in the canonical Wnt signaling pathway by promoting beta-catenin-dependent transcriptional activation. Involved in neurogenesis. Performs a partially redundant function with wnt10b in the formation of the midbrain-hindbrain boundary (MHB) organizer. In the hindbrain, mediates lateral inhibition of boundary cell specification, probably via up-regulation of proneural and Delta gene expression in non-boundary cells; localized expression of wnt1 in boundary cells is maintained via rfng-mediated modulation of Notch activity. The polypeptide is Protein Wnt-1 (wnt1) (Danio rerio (Zebrafish)).